The sequence spans 328 residues: Dihydroorotate dehydrogenase (quinone), mitochondrial (328 aa).

The chain crosses the membrane as a helical span at residues A21–A38. Residues A61–K65 and T85 contribute to the FMN site. Residue K65 coordinates substrate. N110–F114 serves as a coordination point for substrate. Residues N139 and N170 each contribute to the FMN site. Position 170-175 (N170–N175) interacts with substrate. The Nucleophile role is filled by S173. K215 and S243 together coordinate FMN. N244–T245 is a substrate binding site. G266 and G295 together coordinate FMN.

The protein belongs to the dihydroorotate dehydrogenase family. Type 2 subfamily. It depends on FMN as a cofactor.

It localises to the mitochondrion inner membrane. It catalyses the reaction (S)-dihydroorotate + a quinone = orotate + a quinol. The protein operates within pyrimidine metabolism; UMP biosynthesis via de novo pathway; orotate from (S)-dihydroorotate (quinone route): step 1/1. Its function is as follows. Catalyzes the conversion of dihydroorotate to orotate with quinone as electron acceptor. This chain is Dihydroorotate dehydrogenase (quinone), mitochondrial (URA1), found in Cyclocybe aegerita (Black poplar mushroom).